Consider the following 73-residue polypeptide: UPF0499 protein CHGG_06021 (73 aa).

Residues 1–20 (MKSSIHVVLFFLLSLVASMA) form the signal peptide. Disulfide bonds link Cys41-Cys55, Cys48-Cys60, and Cys54-Cys69.

It belongs to the UPF0499 family.

Its subcellular location is the secreted. This is UPF0499 protein CHGG_06021 from Chaetomium globosum (strain ATCC 6205 / CBS 148.51 / DSM 1962 / NBRC 6347 / NRRL 1970) (Soil fungus).